The chain runs to 418 residues: Gamma-glutamyl phosphate reductase (418 aa).

This sequence belongs to the gamma-glutamyl phosphate reductase family.

It localises to the cytoplasm. The catalysed reaction is L-glutamate 5-semialdehyde + phosphate + NADP(+) = L-glutamyl 5-phosphate + NADPH + H(+). Its pathway is amino-acid biosynthesis; L-proline biosynthesis; L-glutamate 5-semialdehyde from L-glutamate: step 2/2. In terms of biological role, catalyzes the NADPH-dependent reduction of L-glutamate 5-phosphate into L-glutamate 5-semialdehyde and phosphate. The product spontaneously undergoes cyclization to form 1-pyrroline-5-carboxylate. This is Gamma-glutamyl phosphate reductase from Geobacter sulfurreducens (strain ATCC 51573 / DSM 12127 / PCA).